The primary structure comprises 524 residues: G1/S-specific cyclin-E (524 aa).

The tract at residues 1–155 is disordered; it reads MAGRKSSRTA…EESHEMVRLE (155 aa). Basic and acidic residues predominate over residues 18–47; the sequence is KPERKSAILSPHDELRERLLETAIDMKENI. The segment covering 48-62 has biased composition (polar residues); the sequence is PQRNTRNSSVGSQKS. Basic and acidic residues-rich tracts occupy residues 63-78, 86-95, and 146-155; these read DCSE…EGPA, KHRNGSREDS, and EESHEMVRLE.

The protein belongs to the cyclin family. Cyclin E subfamily. Interacts with a member of the CDK2/CDK protein kinases to form a serine/threonine kinase holoenzyme complex. The cyclin subunit imparts substrate specificity to the complex. As to expression, expressed dynamically in proliferating cells throughout development. Detectable in larval blast cells undergoing active proliferation that give rise to all tissue types, including germline, intestine, hypodermis, neurons, and muscle.

Its subcellular location is the nucleus. It localises to the cytoplasm. The protein localises to the cytoskeleton. The protein resides in the microtubule organizing center. It is found in the centrosome. Its subcellular location is the centriole. In terms of biological role, essential for the control of the cell cycle at the G1/S (start) transition. In association with cdk-2, regulates proliferation, quiescent state and cell fate during the development of several cell lineages. In the embryo, initiates the establishment of cell polarity through the recruitment of the centrosomal proteins spd-2 and spd-5 during prophase. During the development of the vulva, controls the onset of vulval cell terminal differentiation by controlling the duration of G1 phase. During hypoderm development at early larval stages, controls syncytial fate of seam cell daughter cells. Involved in the progression of cell division in the intestinal lineage in larvae, and in particular in endoreplication, a specific growth pathway in the intestinal epithelium, required for feeding and gut development in growing larvae. By controlling the activity of translational repressor gld-1, regulates the pool of germline stem cells and the size of the mitotic zone by preventing entry into meiosis. In addition, repression of expression by gld-1 prevents mitosis re-entry in meiotic germline cells. This Caenorhabditis elegans protein is G1/S-specific cyclin-E.